Consider the following 445-residue polypeptide: 2-oxoisovalerate dehydrogenase subunit alpha, mitochondrial (445 aa).

Residues 1–45 (MAVAIAAARVWRLNRGLSQAALLLLRQPGARGLARSHPPRQQQQF) constitute a mitochondrion transit peptide. Positions 33–52 (LARSHPPRQQQQFSSLDDKP) are disordered. Thiamine diphosphate is bound by residues tyrosine 158 and arginine 159. Serine 206 lines the K(+) pocket. Position 207 (serine 207) interacts with thiamine diphosphate. K(+) is bound by residues proline 208, threonine 211, and glutamine 212. Glutamate 238 contributes to the Mg(2+) binding site. 3 residues coordinate thiamine diphosphate: glycine 239, alanine 240, and arginine 265. Mg(2+) is bound by residues asparagine 267 and tyrosine 269. Histidine 336 is a thiamine diphosphate binding site. Serine 337 carries the phosphoserine; by BCKDK modification. Phosphothreonine is present on threonine 338. A phosphoserine mark is found at serine 339 and serine 347. Position 356 is an N6-acetyllysine; alternate (lysine 356). Lysine 356 carries the post-translational modification N6-succinyllysine; alternate. N6-succinyllysine is present on lysine 380.

This sequence belongs to the BCKDHA family. As to quaternary structure, heterotetramer of 2 alpha/BCKDHA and 2 beta chains/BCKDHB that forms the branched-chain alpha-keto acid decarboxylase (E1) component of the BCKD complex. The branched-chain alpha-ketoacid dehydrogenase is a large complex composed of three major building blocks E1, E2 and E3. It is organized around E2, a 24-meric cubic core composed of DBT, to which are associated 6 to 12 copies of E1, and approximately 6 copies of the dehydrogenase E3, a DLD dimer. Interacts with PPM1K. The cofactor is thiamine diphosphate. Requires Mg(2+) as cofactor. Post-translationally, phosphorylated at Ser-337 by BCKDK and dephosphorylated by protein phosphatase PPM1K.

It localises to the mitochondrion matrix. The enzyme catalyses N(6)-[(R)-lipoyl]-L-lysyl-[protein] + 3-methyl-2-oxobutanoate + H(+) = N(6)-[(R)-S(8)-2-methylpropanoyldihydrolipoyl]-L-lysyl-[protein] + CO2. Its function is as follows. Together with BCKDHB forms the heterotetrameric E1 subunit of the mitochondrial branched-chain alpha-ketoacid dehydrogenase (BCKD) complex. The BCKD complex catalyzes the multi-step oxidative decarboxylation of alpha-ketoacids derived from the branched-chain amino-acids valine, leucine and isoleucine producing CO2 and acyl-CoA which is subsequently utilized to produce energy. The E1 subunit catalyzes the first step with the decarboxylation of the alpha-ketoacid forming an enzyme-product intermediate. A reductive acylation mediated by the lipoylamide cofactor of E2 extracts the acyl group from the E1 active site for the next step of the reaction. The polypeptide is 2-oxoisovalerate dehydrogenase subunit alpha, mitochondrial (Homo sapiens (Human)).